Here is a 179-residue protein sequence, read N- to C-terminus: Large ribosomal subunit protein uL5 (179 aa).

It belongs to the universal ribosomal protein uL5 family. In terms of assembly, part of the 50S ribosomal subunit; part of the 5S rRNA/L5/L18/L25 subcomplex. Contacts the 5S rRNA and the P site tRNA. Forms a bridge to the 30S subunit in the 70S ribosome.

This is one of the proteins that bind and probably mediate the attachment of the 5S RNA into the large ribosomal subunit, where it forms part of the central protuberance. In the 70S ribosome it contacts protein S13 of the 30S subunit (bridge B1b), connecting the 2 subunits; this bridge is implicated in subunit movement. Contacts the P site tRNA; the 5S rRNA and some of its associated proteins might help stabilize positioning of ribosome-bound tRNAs. This is Large ribosomal subunit protein uL5 from Klebsiella pneumoniae (strain 342).